The sequence spans 241 residues: Endonuclease NucS (241 aa).

The protein belongs to the NucS endonuclease family.

The protein resides in the cytoplasm. In terms of biological role, cleaves both 3' and 5' ssDNA extremities of branched DNA structures. The chain is Endonuclease NucS from Corynebacterium jeikeium (strain K411).